Reading from the N-terminus, the 206-residue chain is ATP-dependent Clp protease proteolytic subunit (206 aa).

Catalysis depends on Ser107, which acts as the Nucleophile. The active site involves His132.

Belongs to the peptidase S14 family. Fourteen ClpP subunits assemble into 2 heptameric rings which stack back to back to give a disk-like structure with a central cavity, resembling the structure of eukaryotic proteasomes.

The protein resides in the cytoplasm. The enzyme catalyses Hydrolysis of proteins to small peptides in the presence of ATP and magnesium. alpha-casein is the usual test substrate. In the absence of ATP, only oligopeptides shorter than five residues are hydrolyzed (such as succinyl-Leu-Tyr-|-NHMec, and Leu-Tyr-Leu-|-Tyr-Trp, in which cleavage of the -Tyr-|-Leu- and -Tyr-|-Trp bonds also occurs).. Cleaves peptides in various proteins in a process that requires ATP hydrolysis. Has a chymotrypsin-like activity. Plays a major role in the degradation of misfolded proteins. This Idiomarina loihiensis (strain ATCC BAA-735 / DSM 15497 / L2-TR) protein is ATP-dependent Clp protease proteolytic subunit.